The chain runs to 561 residues: Glutamate--tRNA ligase (561 aa).

Positions 107–117 (PNPSGPLHLGH) match the 'HIGH' region motif.

This sequence belongs to the class-I aminoacyl-tRNA synthetase family. Glutamate--tRNA ligase type 2 subfamily.

The protein resides in the cytoplasm. It catalyses the reaction tRNA(Glu) + L-glutamate + ATP = L-glutamyl-tRNA(Glu) + AMP + diphosphate. Functionally, catalyzes the attachment of glutamate to tRNA(Glu) in a two-step reaction: glutamate is first activated by ATP to form Glu-AMP and then transferred to the acceptor end of tRNA(Glu). This Methanospirillum hungatei JF-1 (strain ATCC 27890 / DSM 864 / NBRC 100397 / JF-1) protein is Glutamate--tRNA ligase.